Consider the following 170-residue polypeptide: Lipoprotein signal peptidase (170 aa).

3 helical membrane-spanning segments follow: residues 9–29, 72–92, and 95–117; these read FNIF…KYLV, IFFI…ALKE, and CITR…DRLF. Residues Asp124 and Asp146 contribute to the active site. The chain crosses the membrane as a helical span at residues 143 to 163; that stretch reads NFADSYVVIGMILFLVYDFFI.

The protein belongs to the peptidase A8 family.

It localises to the cell inner membrane. The enzyme catalyses Release of signal peptides from bacterial membrane prolipoproteins. Hydrolyzes -Xaa-Yaa-Zaa-|-(S,diacylglyceryl)Cys-, in which Xaa is hydrophobic (preferably Leu), and Yaa (Ala or Ser) and Zaa (Gly or Ala) have small, neutral side chains.. Its pathway is protein modification; lipoprotein biosynthesis (signal peptide cleavage). Its function is as follows. This protein specifically catalyzes the removal of signal peptides from prolipoproteins. The polypeptide is Lipoprotein signal peptidase (Borrelia garinii subsp. bavariensis (strain ATCC BAA-2496 / DSM 23469 / PBi) (Borreliella bavariensis)).